Reading from the N-terminus, the 60-residue chain is Potassium channel toxin alpha-KTx 15.9 (60 aa).

Residues 1 to 22 (MKIFLPVLVMLILCSMCLLTEG) form the signal peptide. Disulfide bonds link cysteine 30/cysteine 51, cysteine 36/cysteine 56, and cysteine 40/cysteine 58.

It belongs to the short scorpion toxin superfamily. Potassium channel inhibitor family. Alpha-KTx 15 subfamily. Expressed by the venom gland.

The protein resides in the secreted. Functionally, blocker of A-type voltage-gated potassium channels of cerebellar granular cells. May also inhibit Kv4/KCND when coexpressed with DPP6 or DPP10. The occlusion of the outer entry of the K(+) conducting pore is partially reversible and affects both open and closed channels. It shares the same target in rat brain than BmTX3 (AC Q8I0L5) and AmmTX3 (AC P60208). Has been shown to weakly inhibit TRPV1 channels. This chain is Potassium channel toxin alpha-KTx 15.9, found in Lychas mucronatus (Chinese swimming scorpion).